The chain runs to 504 residues: Acetyltransferase pyiB (504 aa).

The N-terminal stretch at 1-18 (MGFLSAGGLWASLFRARI) is a signal peptide. N-linked (GlcNAc...) asparagine glycosylation is present at Asn-84. His-181 serves as the catalytic Proton acceptor. N-linked (GlcNAc...) asparagine glycosylation is found at Asn-413 and Asn-467.

This sequence belongs to the plant acyltransferase family.

Its pathway is mycotoxin biosynthesis. Its function is as follows. Acetyltransferase; part of the gene cluster that mediates the biosynthesis of the mycotoxin pyrichalasin H, a tyrosine-derived cytochalasan that inhibits the growth of rice seedlings, but also inhibits lymphocyte capping and actin polymerization and alters cell morphology. Pyrichalasin H is indicated as the responsible agent for the genus-specific pathogenicity of M.grisea toward crabgrass. The first step in the pathway is catalyzed by the O-methyltransferase pyiA which methylates free tyrosine to generate the precursor O-methyltyrosine. The hybrid PKS-NRPS pyiS, assisted by the enoyl reductase pyiC, are responsible for fusion of the O-methyltyrosine precursor and the polyketide backbone. The polyketide synthase module (PKS) of pyiS is responsible for the synthesis of the polyketide backbone and the downstream nonribosomal peptide synthetase (NRPS) amidates the carboxyl end of the polyketide with the O-methyltyrosine precursor. As the NRPS A-domain demonstrates substrate tolerance, pyiS can also use phenylalanine, tyrosine and even para-chlorophenylalanine as amino acid precursor, which leads to the production of novel cytochalasans, including halogenated cytochalasans. Because pyiS lacks a designated enoylreductase (ER) domain, the required activity is provided the enoyl reductase pyiC. Reduction by the hydrolyase pyiE leads to 1,5-dihydropyrrolone, which is substrate for dehydration and intra-molecular Diels-Alder cyclization by the Diels-Alderase pyiF to yield the required isoindolone-fused macrocycle. The tailoring cytochrome P450 monooxygenases piyD and piyG catalyze the hydroxylation at C-18 and C-7, respectivily, whereas the short-chain dehydrogenase/reductase pyiH reduces the carbonyl at C-21 in preparation for the transfer of an acetyl group by the acetyltransferase pyiB. These 3 reactions whose order is not clear yet, lead to the production of O-methylpyrichalasin J, a deacetylated pyrichalasin H. Finally, pyiB to converts O-methylpyrichalasin J into the final product pyrichalasin H via acetylation of C-21. This chain is Acetyltransferase pyiB, found in Pyricularia grisea (Crabgrass-specific blast fungus).